A 330-amino-acid polypeptide reads, in one-letter code: MKVFYDSDFKLDALKEKTIAVIGYGSQGRAQSLNMKDSGLNVVVGLRKNGASWENAKADGHNVMTIEEAAEKADIIHILIPDELQAEVYDAQIKPYLKEGKTLSFSHGFNIHYGFIVPPKGVNVVLVAPKSPGKMVRRTYEEGFGVPGLICIEIDATNNAFDIVSAMAKGIGLSRAGVIQTTFKEETETDLFGEQAVLCGGVTELIKAGFETLVEAGYAPEMAYFETCHELKLIVDLIYQKGFKNMWNDVSNTAEYGGLTRRSRIVTADSKAAMKEILKEIQDGRFTKEFVLEKQVNHAHLKAMRRLEGELQIEEVGAKLRKMCGLEKEE.

Residues 1–181 (MKVFYDSDFK…GLSRAGVIQT (181 aa)) form the KARI N-terminal Rossmann domain. Residues 24–27 (YGSQ), arginine 47, serine 52, and 82–85 (DELQ) each bind NADP(+). Residue histidine 107 is part of the active site. Position 133 (glycine 133) interacts with NADP(+). The 146-residue stretch at 182-327 (TFKEETETDL…AKLRKMCGLE (146 aa)) folds into the KARI C-terminal knotted domain. Positions 190, 194, 226, and 230 each coordinate Mg(2+). Position 251 (serine 251) interacts with substrate.

It belongs to the ketol-acid reductoisomerase family. Mg(2+) serves as cofactor.

It catalyses the reaction (2R)-2,3-dihydroxy-3-methylbutanoate + NADP(+) = (2S)-2-acetolactate + NADPH + H(+). The enzyme catalyses (2R,3R)-2,3-dihydroxy-3-methylpentanoate + NADP(+) = (S)-2-ethyl-2-hydroxy-3-oxobutanoate + NADPH + H(+). It functions in the pathway amino-acid biosynthesis; L-isoleucine biosynthesis; L-isoleucine from 2-oxobutanoate: step 2/4. The protein operates within amino-acid biosynthesis; L-valine biosynthesis; L-valine from pyruvate: step 2/4. Functionally, involved in the biosynthesis of branched-chain amino acids (BCAA). Catalyzes an alkyl-migration followed by a ketol-acid reduction of (S)-2-acetolactate (S2AL) to yield (R)-2,3-dihydroxy-isovalerate. In the isomerase reaction, S2AL is rearranged via a Mg-dependent methyl migration to produce 3-hydroxy-3-methyl-2-ketobutyrate (HMKB). In the reductase reaction, this 2-ketoacid undergoes a metal-dependent reduction by NADPH to yield (R)-2,3-dihydroxy-isovalerate. In Methanococcus maripaludis (strain C7 / ATCC BAA-1331), this protein is Ketol-acid reductoisomerase (NADP(+)).